A 113-amino-acid polypeptide reads, in one-letter code: FK506-binding protein 1B (113 aa).

The PPIase FKBP-type domain occupies 19–113; sequence GQTVVIEYTG…IFDVYLKGLQ (95 aa).

Belongs to the FKBP-type PPIase family. FKBP1 subfamily.

The protein resides in the cytoplasm. The catalysed reaction is [protein]-peptidylproline (omega=180) = [protein]-peptidylproline (omega=0). Inhibited by both FK506 and rapamycin. Its function is as follows. PPIases accelerate the folding of proteins. It catalyzes the cis-trans isomerization of proline imidic peptide bonds in oligopeptides. This is FK506-binding protein 1B (fkr-3) from Neurospora crassa (strain ATCC 24698 / 74-OR23-1A / CBS 708.71 / DSM 1257 / FGSC 987).